Reading from the N-terminus, the 389-residue chain is Smad nuclear interacting protein 1 (389 aa).

Basic and acidic residues predominate over residues 1 to 10 (MKAGKSERER). A disordered region spans residues 1–212 (MKAGKSERER…GNKNKEVPVK (212 aa)). Residue serine 18 is modified to Phosphoserine. Lysine 28 participates in a covalent cross-link: Glycyl lysine isopeptide (Lys-Gly) (interchain with G-Cter in SUMO); alternate. Residue lysine 28 forms a Glycyl lysine isopeptide (Lys-Gly) (interchain with G-Cter in SUMO1); alternate linkage. A Glycyl lysine isopeptide (Lys-Gly) (interchain with G-Cter in SUMO2); alternate cross-link involves residue lysine 28. A compositionally biased stretch (basic and acidic residues) spans 28-43 (KQERLSPEPVAHRRPD). A phosphoserine mark is found at serine 33 and serine 48. Over residues 54-72 (AESGSAGHRGSRARGASRS) the composition is skewed to low complexity. Residues 73 to 95 (PAKKKSKSSGRRSKSPRTKRSRS) are compositionally biased toward basic residues. Serine 95 carries the phosphoserine modification. Composition is skewed to basic and acidic residues over residues 103 to 138 (VKQE…ERDR) and 147 to 163 (RSSD…DRDS). Residue lysine 104 forms a Glycyl lysine isopeptide (Lys-Gly) (interchain with G-Cter in SUMO2) linkage. The residue at position 149 (serine 149) is a Phosphoserine. The stretch at 166–197 (LQAQEEERDFNNARRREHRQQNESAGAEAQEV) forms a coiled coil. Lysine 214 is covalently cross-linked (Glycyl lysine isopeptide (Lys-Gly) (interchain with G-Cter in SUMO2)). The FHA domain maps to 272-335 (YLLGRHRRIA…NGTFLNNKRI (64 aa)). The span at 363-373 (ESSDTSELDRK) shows a compositional bias: basic and acidic residues. The tract at residues 363–389 (ESSDTSELDRKEDEDEEEEEEMVSDSS) is disordered. Acidic residues predominate over residues 374–389 (EDEDEEEEEEMVSDSS). Position 386 is a phosphoserine (serine 386).

In terms of assembly, component of activated spliceosome complexes. Component of the minor spliceosome, which splices U12-type introns. Binds SMAD4 and CREBBP/EP300. Binds the SMAD1/OAZ1/PSMB4 complex. Interacts with DROSHA and SMARCA4. Component of the SNARP complex which consists at least of SNIP1, SNW1, THRAP3, BCLAF1 and PNN. In terms of processing, degraded by the proteasome upon binding to the SMAD1/OAZ1/PSMB4 complex.

The protein resides in the nucleus. Functionally, required for pre-mRNA splicing as component of the spliceosome. As a component of the minor spliceosome, involved in the splicing of U12-type introns in pre-mRNAs. Down-regulates NF-kappa-B signaling by competing with RELA for CREBBP/EP300 binding. Involved in the microRNA (miRNA) biogenesis. May be involved in cyclin-D1/CCND1 mRNA stability through the SNARP complex which associates with both the 3'end of the CCND1 gene and its mRNA. This Rattus norvegicus (Rat) protein is Smad nuclear interacting protein 1 (Snip1).